The following is a 243-amino-acid chain: DNA repair protein RecO (243 aa).

Belongs to the RecO family.

Functionally, involved in DNA repair and RecF pathway recombination. The sequence is that of DNA repair protein RecO from Beutenbergia cavernae (strain ATCC BAA-8 / DSM 12333 / CCUG 43141 / JCM 11478 / NBRC 16432 / NCIMB 13614 / HKI 0122).